Consider the following 91-residue polypeptide: Small ribosomal subunit protein bS18 (91 aa).

Residues 1-14 (MTNQNQSQTQTTQT) show a composition bias toward low complexity. The interval 1–24 (MTNQNQSQTQTTQTVEKVSSRQKK) is disordered.

Belongs to the bacterial ribosomal protein bS18 family. As to quaternary structure, part of the 30S ribosomal subunit. Forms a tight heterodimer with protein bS6.

In terms of biological role, binds as a heterodimer with protein bS6 to the central domain of the 16S rRNA, where it helps stabilize the platform of the 30S subunit. This chain is Small ribosomal subunit protein bS18, found in Caldicellulosiruptor saccharolyticus (strain ATCC 43494 / DSM 8903 / Tp8T 6331).